The chain runs to 100 residues: Large ribosomal subunit protein eL30 (100 aa).

This sequence belongs to the eukaryotic ribosomal protein eL30 family.

The protein is Large ribosomal subunit protein eL30 of Methanococcus maripaludis (strain DSM 14266 / JCM 13030 / NBRC 101832 / S2 / LL).